The primary structure comprises 211 residues: Potassium-transporting ATPase KdpC subunit (211 aa).

The chain crosses the membrane as a helical span at residues Val-13–Phe-35.

The protein belongs to the KdpC family. The system is composed of three essential subunits: KdpA, KdpB and KdpC.

The protein resides in the cell inner membrane. In terms of biological role, part of the high-affinity ATP-driven potassium transport (or Kdp) system, which catalyzes the hydrolysis of ATP coupled with the electrogenic transport of potassium into the cytoplasm. This subunit acts as a catalytic chaperone that increases the ATP-binding affinity of the ATP-hydrolyzing subunit KdpB by the formation of a transient KdpB/KdpC/ATP ternary complex. The protein is Potassium-transporting ATPase KdpC subunit of Myxococcus xanthus (strain DK1622).